The chain runs to 211 residues: Arginine exporter protein ArgO (211 aa).

6 consecutive transmembrane segments (helical) span residues 1-21 (MISYYFQGFALGAAMILPLGP), 37-57 (LMIALLCALSDLVLISAGIFG), 68-88 (LLALVTWGGVAFLLWYGFGAL), 111-131 (IIATMLAVTWLNPHVYLDTFV), 147-167 (WFALGTISASFLWFFGLALLA), and 179-199 (AQRIINILVGVVMWLIAFQLA).

Belongs to the LysE/ArgO transporter (TC 2.A.75) family.

It is found in the cell inner membrane. It carries out the reaction L-arginine(in) = L-arginine(out). Involved in the export of arginine. Important to control the intracellular level of arginine and the correct balance between arginine and lysine. In Salmonella newport (strain SL254), this protein is Arginine exporter protein ArgO.